Reading from the N-terminus, the 194-residue chain is Thymidine kinase (194 aa).

Residues 9–16 and 85–88 each bind ATP; these read GAMNSGKT and DECQ. The active-site Proton acceptor is the glutamate 86. The Zn(2+) site is built by cysteine 143, cysteine 146, cysteine 180, and histidine 183.

Belongs to the thymidine kinase family. Homotetramer.

The protein resides in the cytoplasm. It carries out the reaction thymidine + ATP = dTMP + ADP + H(+). The sequence is that of Thymidine kinase from Enterococcus faecalis (strain ATCC 700802 / V583).